The following is a 256-amino-acid chain: MPCSRALILGVLALNTMLSLCGGEDDIEADHVGFYGTTVYQSPGDIGQYTHEFDGDELFYVDLDKKKTVWRLPEFGQLILFEPQGGLQNIAAEKHNLGILTKRSNFTPATNEAPQATVFPKSPVLLGQPNTLICFVDNIFPPVINITWLRNSKSVTDGVYETSFLVNRDHSFHKLSYLTFIPSDDDIYDCKVEHWGLEEPVLKHWEPEIPAPMSELTETVVCALGLSVGLVGIVVGTIFIIQGLRSGGTSRHPGPL.

A signal peptide spans 1-23; the sequence is MPCSRALILGVLALNTMLSLCGG. Residues 24-111 form an alpha-1 region; it reads EDDIEADHVG…KRSNFTPATN (88 aa). Residues 24 to 218 are Extracellular-facing; the sequence is EDDIEADHVG…IPAPMSELTE (195 aa). An alpha-2 region spans residues 112–205; it reads EAPQATVFPK…GLEEPVLKHW (94 aa). Positions 114–206 constitute an Ig-like C1-type domain; it reads PQATVFPKSP…LEEPVLKHWE (93 aa). Cys134 and Cys190 form a disulfide bridge. Residue Asn145 is glycosylated (N-linked (GlcNAc...) asparagine). Positions 206–218 are connecting peptide; that stretch reads EPEIPAPMSELTE. The chain crosses the membrane as a helical span at residues 219 to 244; sequence TVVCALGLSVGLVGIVVGTIFIIQGL. The Cytoplasmic segment spans residues 245 to 256; the sequence is RSGGTSRHPGPL.

The protein belongs to the MHC class II family.

The protein resides in the membrane. The sequence is that of H-2 class II histocompatibility antigen, A-D alpha chain (H2-Aa) from Mus musculus (Mouse).